The primary structure comprises 323 residues: ATP synthase gamma chain (323 aa).

The protein belongs to the ATPase gamma chain family. In terms of assembly, F-type ATPases have 2 components, CF(1) - the catalytic core - and CF(0) - the membrane proton channel. CF(1) has five subunits: alpha(3), beta(3), gamma(1), delta(1), epsilon(1). CF(0) has three main subunits: a, b and c.

The protein localises to the cell inner membrane. Produces ATP from ADP in the presence of a proton gradient across the membrane. The gamma chain is believed to be important in regulating ATPase activity and the flow of protons through the CF(0) complex. The polypeptide is ATP synthase gamma chain (Rickettsia rickettsii (strain Iowa)).